The following is an 82-amino-acid chain: Proline, histidine and glycine-rich protein 1 (82 aa).

The interval 20–82 is disordered; the sequence is HCGPPPGHGP…PGHPPPGPHH (63 aa).

This chain is Proline, histidine and glycine-rich protein 1 (PHGR1), found in Homo sapiens (Human).